Here is a 198-residue protein sequence, read N- to C-terminus: Carnitine operon protein CaiE (198 aa).

A disordered region spans residues 179–198 (VEENRPRLKGTTDVKPKSAQ). The span at 180–198 (EENRPRLKGTTDVKPKSAQ) shows a compositional bias: basic and acidic residues.

It belongs to the transferase hexapeptide repeat family.

It participates in amine and polyamine metabolism; carnitine metabolism. Functionally, overproduction of CaiE stimulates the activity of CaiB and CaiD. The sequence is that of Carnitine operon protein CaiE from Salmonella agona (strain SL483).